A 308-amino-acid polypeptide reads, in one-letter code: Uridylate cyclase (308 aa).

Mn(2+) is bound by residues Asp62 and Asp106.

This sequence belongs to the adenylyl cyclase class-4/guanylyl cyclase family. Pyrimidine cyclase subfamily. Homodimer. Requires Mn(2+) as cofactor.

Its subcellular location is the cytoplasm. It carries out the reaction GTP = 3',5'-cyclic GMP + diphosphate. The catalysed reaction is UTP = 3',5'-cyclic UMP + diphosphate. In terms of biological role, pycsar (pyrimidine cyclase system for antiphage resistance) provides immunity against bacteriophage. The pyrimidine cyclase (PycC) synthesizes cyclic nucleotides in response to infection; these serve as specific second messenger signals. The signals activate the adjacent effector, leading to bacterial cell death and abortive phage infection. A clade D Pycsar system. Functionally, the pyrimidine cyclase gene of a two-gene Pycsar system, generates cyclic UMP (cUMP) from UTP as well as cGMP from GTP to a lesser extent, has little to no activity on ATP or CTP. Expression of this and adjacent effector PtPycTM (AC A0A4Q9KQH5) probably confers resistance to bacteriophage. The genes are probably only expressed in response to bacteriophage infection. In Propioniciclava tarda, this protein is Uridylate cyclase.